Here is a 743-residue protein sequence, read N- to C-terminus: MADSTGLQFTVKVGALPESTFVVAEFALDEALNRPFNLRLELASAQPDIDFGAVLDQPCELLVWYNGELQRRVCGVVSDFAQGDSGFRRTRYQLMVQPALWRLSLRQNCRIFQAQKPDEILSILLQEHGITDYAFALKNEHAKREYCVQYRETDLDFVNRLAAEEGMFYFHEFEAGKHRIVFADDAAALTAGPELFFNLGNRSLEQGPYVRQFHYREAVRPSDVELKDYSCKTPAYGLSHKKQGSELEHQRDTYQHFDYPGRYKQDPSGKAFAQHRLDALRNDAVAGQVKSNCAALLPGQTFSLTEHPNGSLNTDWQIVRIRHTGEQPQALEEEGGSGPTVYHNEFGVVKASTTWRARIGSPEAPHKPMVDGPQIAMVVGPDGEEIYCDEHGRVKLQFPWDRYGSSNDQSSCWVRVSQGWAGGQYGMMAIPRIGHEVIVSFLEGDPDQPIVTGRTYHATNRPPYELPANKTRTVLRTETHQGEGFNELRFEDQAGQEEIYIHGQKDLNVLIENDAAWHIKHDQHTDIDNERVTRVRKVPGEEGAPPSLGNDHLTVEGEKRDHIKADYSLTVDTSMHQKLGQSWLTQAGQEVHVKAGAKVVLEAGSEITVKVGGCFIKVDGGGVTLVGPTIKMNSGGNAGSGSGWAGKVPKSMEGMLDSPHTRWMKFYHLDSELMPLAGTPYKAVLSDGSVREGTLDGEGMALLEDVPAGTASVTYDLQDTFADLPRESISALTGHLDSLSDEG.

The protein belongs to the VgrG protein family.

The protein resides in the secreted. It catalyses the reaction L-arginyl-[protein] + NAD(+) = N(omega)-(ADP-D-ribosyl)-L-arginyl-[protein] + nicotinamide + H(+). Functionally, part of the type VI secretion system specialized secretion system, which delivers several virulence factors in both prokaryotic and eukaryotic cells during infection. Acts directly as an secreted effector with an actin ADP-ribosyltransferase activity that disrupts the host actin cytoskeleton, leading to a decrease in host cell viability and an increase in apoptosis. In Aeromonas hydrophila subsp. hydrophila (strain ATCC 7966 / DSM 30187 / BCRC 13018 / CCUG 14551 / JCM 1027 / KCTC 2358 / NCIMB 9240 / NCTC 8049), this protein is Type VI secretion system spike protein VgrG1 (vgrG1).